A 94-amino-acid chain; its full sequence is MKVKILRYHAIANWTWDTPKDDVCGICRVPFDGCCPQCTSPGDNCPIVWGKCKHIFHAHCIQNWLATSGSQGQCPMDRQTFVVADSTNEKSETQ.

An RING-type zinc finger spans residues 35 to 78; the sequence is CPQCTSPGDNCPIVWGKCKHIFHAHCIQNWLATSGSQGQCPMDR.

In terms of assembly, the APC/C is composed of at least 13 subunits: apc1, apc2, nuc2, apc4, apc5, cut9, apc8, apc10, apc11, hcn1, apc13, apc14 and apc15.

Functionally, component of the anaphase-promoting complex/cyclosome (APC/C), a cell cycle-regulated E3 ubiquitin-protein ligase complex that controls progression through mitosis and the G1 phase of the cell cycle. The APC/C is thought to confer substrate specificity and, in the presence of ubiquitin-conjugating E2 enzymes, it catalyzes the formation of protein-ubiquitin conjugates that are subsequently degraded by the 26S proteasome. The protein is Anaphase-promoting complex subunit 11 (apc11) of Schizosaccharomyces pombe (strain 972 / ATCC 24843) (Fission yeast).